The chain runs to 87 residues: uncharacterized protein (87 aa).

A helical transmembrane segment spans residues 63-83; that stretch reads IVLALVLGVFSLVGLIFIIYF.

It is found in the membrane. This is an uncharacterized protein from Dictyostelium discoideum (Social amoeba).